A 472-amino-acid chain; its full sequence is Phenylalanine--tRNA ligase, mitochondrial (472 aa).

Substrate contacts are provided by residues 157–160, Arg-179, 186–188, and 193–195; these read SAHQ, QHY, and QLE. N6-acetyllysine is present on Lys-202. 2 residues coordinate substrate: Glu-287 and Phe-312. Residues 379 to 471 form the FDX-ACB domain; sequence SKYPAVFNDI…AVQLLGVEGR (93 aa).

This sequence belongs to the class-II aminoacyl-tRNA synthetase family. Monomer. As to expression, mainly expressed in the Purkinje cell of cerebellum.

It is found in the mitochondrion matrix. Its subcellular location is the mitochondrion. The catalysed reaction is tRNA(Phe) + L-phenylalanine + ATP = L-phenylalanyl-tRNA(Phe) + AMP + diphosphate + H(+). Is responsible for the charging of tRNA(Phe) with phenylalanine in mitochondrial translation. To a lesser extent, also catalyzes direct attachment of m-Tyr (an oxidized version of Phe) to tRNA(Phe), thereby opening the way for delivery of the misacylated tRNA to the ribosome and incorporation of ROS-damaged amino acid into proteins. The chain is Phenylalanine--tRNA ligase, mitochondrial (Fars2) from Rattus norvegicus (Rat).